Here is a 263-residue protein sequence, read N- to C-terminus: HTH-type transcriptional regulator KdgR (263 aa).

The HTH iclR-type domain maps to V13–L74. A DNA-binding region (H-T-H motif) is located at residues I34–Q53. Positions L89–Y258 constitute an IclR-ED domain.

The protein localises to the cytoplasm. Transcriptional repressor that negatively regulates the expression of kdgT, kdgK and kdgA, which encode proteins involved in transport and catabolism of 2-keto-3-deoxygluconate (KDG). Also represses expression of eda, which encodes the Entner-Doudoroff aldolase, by binding to its P2 promoter region. The chain is HTH-type transcriptional regulator KdgR from Escherichia coli (strain K12).